A 551-amino-acid polypeptide reads, in one-letter code: Serine beta-lactamase-like protein LACTB, mitochondrial (551 aa).

A mitochondrion-targeting transit peptide spans 1 to 113; it reads MYRLLSSVTA…RAIESSRDLL (113 aa). The tract at residues 69–101 is disordered; that stretch reads PADPEASGTTELSHEQALSPGSPHTPAPPAARG. Serine 162 functions as the Acyl-ester intermediate in the catalytic mechanism. Residues 237–287 form a disordered region; sequence LKMVKGTPPPSDQEKELKEKGGKNNEKSDAPKAKVEQDSEARCRSAKPGKK. Residues 248–279 are compositionally biased toward basic and acidic residues; sequence DQEKELKEKGGKNNEKSDAPKAKVEQDSEARC. N6-succinyllysine occurs at positions 287 and 288. 2 positions are modified to N6-acetyllysine: lysine 301 and lysine 346.

It belongs to the peptidase S12 family. As to expression, expressed predominantly in liver.

It is found in the mitochondrion. Mitochondrial serine protease that acts as a regulator of mitochondrial lipid metabolism. Acts by decreasing protein levels of PISD, a mitochondrial enzyme that converts phosphatidylserine (PtdSer) to phosphatidylethanolamine (PtdEtn), thereby affecting mitochondrial lipid metabolism. It is unclear whether it acts directly by mediating proteolysis of PISD or by mediating proteolysis of another lipid metabolism protein. Acts as a tumor suppressor that has the ability to inhibit proliferation of multiple types of cancer cells: probably by promoting decreased levels of PISD, thereby affecting mitochondrial lipid metabolism. This chain is Serine beta-lactamase-like protein LACTB, mitochondrial, found in Mus musculus (Mouse).